The following is a 346-amino-acid chain: NSSLPTNISGGTPAVSAGYLFLDIVTYLVFAVTFVLGVLGNGLVIWVAGFRMTHTVTTISYLNLAVADFCFTSTLPFFMVKKAMGGHWPFGWFLCKFIFTIVDINLFGSVFLIALIALDRCVCVLHPVWTQNHRTVSLAKKVIIGPWVMALLLTLPVIIRVTTVPGKMGTVACTFNFSPWTNDPKERIKVAVAMLTVRGIIRFIIGFSAPMSIVAVSYGLIATKIDKQGLIKSSRTLRVLSFVAAAFFLSWSPYQVVALIATVRIRELLQGMYKEIGIAVDVTSALAFFNSCLNPMLYVFMGQDFRERLIHALPASLERALTEDSTQTSDTATNSTLPSAEVALQA.

Asn-1 and Asn-7 each carry an N-linked (GlcNAc...) asparagine glycan. Residues 1–24 are Extracellular-facing; sequence NSSLPTNISGGTPAVSAGYLFLDI. A helical membrane pass occupies residues 25 to 47; the sequence is VTYLVFAVTFVLGVLGNGLVIWV. At 48-58 the chain is on the cytoplasmic side; that stretch reads AGFRMTHTVTT. Residues 59–80 form a helical membrane-spanning segment; the sequence is ISYLNLAVADFCFTSTLPFFMV. Topologically, residues 81–97 are extracellular; that stretch reads KKAMGGHWPFGWFLCKF. Cys-95 and Cys-173 are disulfide-bonded. The helical transmembrane segment at 98-118 threads the bilayer; sequence IFTIVDINLFGSVFLIALIAL. Residues 119-137 are Cytoplasmic-facing; sequence DRCVCVLHPVWTQNHRTVS. Residues 138 to 159 traverse the membrane as a helical segment; the sequence is LAKKVIIGPWVMALLLTLPVII. Residues 160–202 are Extracellular-facing; sequence RVTTVPGKMGTVACTFNFSPWTNDPKERIKVAVAMLTVRGIIR. Residues 203 to 223 traverse the membrane as a helical segment; it reads FIIGFSAPMSIVAVSYGLIAT. Topologically, residues 224 to 239 are cytoplasmic; that stretch reads KIDKQGLIKSSRTLRV. A helical transmembrane segment spans residues 240–263; that stretch reads LSFVAAAFFLSWSPYQVVALIATV. The Extracellular segment spans residues 264–282; the sequence is RIRELLQGMYKEIGIAVDV. Residues 283-302 traverse the membrane as a helical segment; that stretch reads TSALAFFNSCLNPMLYVFMG. At 303–346 the chain is on the cytoplasmic side; the sequence is QDFRERLIHALPASLERALTEDSTQTSDTATNSTLPSAEVALQA. A disordered region spans residues 322–346; it reads TEDSTQTSDTATNSTLPSAEVALQA. Positions 323–338 are enriched in polar residues; sequence EDSTQTSDTATNSTLP.

It belongs to the G-protein coupled receptor 1 family. Phosphorylated; which is necessary for desensitization.

The protein localises to the cell membrane. In terms of biological role, high affinity receptor for N-formyl-methionyl peptides (fMLP), which are powerful neutrophil chemotactic factors. Binding of fMLP to the receptor stimulates intracellular calcium mobilization and superoxide anion release. This response is mediated via a G-protein that activates a phosphatidylinositol-calcium second messenger system. Receptor for TAFA4, mediates its effects on chemoattracting macrophages, promoting phagocytosis and increasing ROS release. Receptor for cathepsin CTSG, leading to increased phagocyte chemotaxis. The polypeptide is fMet-Leu-Phe receptor (FPR1) (Gorilla gorilla gorilla (Western lowland gorilla)).